Here is a 213-residue protein sequence, read N- to C-terminus: MVDPKRLRRRMVREQLEARGINDAEVLAAMSAVPRHLFVQEALRAQAYEDTPLPIGYGQTISQPYVVALMSQLLEVRRGMRVLEIGTGSGYQAAVLATMGCTVFTVERLRELYQDTGNLLRQLGLRGVHMQRRDGTLGMPEAAPFDRIIVTAGGPEVPRPLTDQLDEGGILLIPVGPRPRAQRLMRFRKEQGRMTGEDLGPAIFVDLVGDHGW.

Ser-62 is a catalytic residue.

It belongs to the methyltransferase superfamily. L-isoaspartyl/D-aspartyl protein methyltransferase family.

The protein resides in the cytoplasm. It carries out the reaction [protein]-L-isoaspartate + S-adenosyl-L-methionine = [protein]-L-isoaspartate alpha-methyl ester + S-adenosyl-L-homocysteine. Functionally, catalyzes the methyl esterification of L-isoaspartyl residues in peptides and proteins that result from spontaneous decomposition of normal L-aspartyl and L-asparaginyl residues. It plays a role in the repair and/or degradation of damaged proteins. The polypeptide is Protein-L-isoaspartate O-methyltransferase (Desulfovibrio desulfuricans (strain ATCC 27774 / DSM 6949 / MB)).